The following is a 538-amino-acid chain: Chaperonin GroEL (538 aa).

Residues 29–32, 86–90, Gly413, 479–481, and Asp495 contribute to the ATP site; these read TLGP, DGTTT, and DAL.

This sequence belongs to the chaperonin (HSP60) family. As to quaternary structure, forms a cylinder of 14 subunits composed of two heptameric rings stacked back-to-back. Interacts with the co-chaperonin GroES.

The protein localises to the cytoplasm. It catalyses the reaction ATP + H2O + a folded polypeptide = ADP + phosphate + an unfolded polypeptide.. In terms of biological role, together with its co-chaperonin GroES, plays an essential role in assisting protein folding. The GroEL-GroES system forms a nano-cage that allows encapsulation of the non-native substrate proteins and provides a physical environment optimized to promote and accelerate protein folding. The sequence is that of Chaperonin GroEL from Thermotoga neapolitana.